The sequence spans 215 residues: Large ribosomal subunit protein eL14 (215 aa).

Residue Lys-79 is modified to N6-acetyllysine. Lys-85 is modified (N6-acetyllysine; alternate). Position 85 is an N6-succinyllysine; alternate (Lys-85). Lys-124 participates in a covalent cross-link: Glycyl lysine isopeptide (Lys-Gly) (interchain with G-Cter in SUMO2). A Phosphoserine modification is found at Ser-139. Positions 161 to 215 (VPAKKITAASKKAPAQKVPAQKATGQKAAPAPKAQKGQKAPAQKAPAPKASGKKA) are disordered. Tandem repeats lie at residues 171–175 (KKAPA), 176–180 (QKVPA), 181–185 (QKATG), 186–190 (QKAAP), 193–195 (KAQ), and 196–198 (KGQ). The 4 X 5 AA tandem repeats of Q-K-A-[PAS]-X stretch occupies residues 171-190 (KKAPAQKVPAQKATGQKAAP). A 2 X 3 AA tandem repeats of K-[GA]-Q region spans residues 193–198 (KAQKGQ). Position 204 is an N6-succinyllysine (Lys-204).

The protein belongs to the eukaryotic ribosomal protein eL14 family. Component of the large ribosomal subunit.

The protein localises to the cytoplasm. Component of the large ribosomal subunit. The ribosome is a large ribonucleoprotein complex responsible for the synthesis of proteins in the cell. The chain is Large ribosomal subunit protein eL14 (RPL14) from Homo sapiens (Human).